The chain runs to 1822 residues: Signal-induced proliferation-associated 1-like protein 1 (1822 aa).

Disordered stretches follow at residues methionine 1–histidine 30 and glycine 47–asparagine 125. Over residues proline 84–serine 94 the composition is skewed to basic and acidic residues. Low complexity predominate over residues arginine 95–asparagine 125. 6 positions are modified to phosphoserine: serine 162, serine 187, serine 193, serine 208, serine 255, and serine 288. The disordered stretch occupies residues glutamate 277–arginine 297. The region spanning phenylalanine 638 to leucine 855 is the Rap-GAP domain. The PDZ domain occupies glutamate 992–aspartate 1068. A phosphoserine mark is found at serine 1117, serine 1126, serine 1155, serine 1166, serine 1188, serine 1209, and serine 1220. Residues alanine 1134–leucine 1165 form a disordered region. Positions serine 1183–aspartate 1252 are disordered. Residues serine 1188–threonine 1198 are compositionally biased toward low complexity. Residues aspartate 1225–glutamine 1244 show a composition bias toward polar residues. Serine 1273 and serine 1288 each carry phosphoserine. Residues histidine 1286–glycine 1324 are disordered. Residues serine 1300–alanine 1315 are compositionally biased toward low complexity. A Phosphoserine; by PLK2 modification is found at serine 1344. Threonine 1348 carries the phosphothreonine; by PLK2 modification. The span at threonine 1358–serine 1367 shows a compositional bias: low complexity. Residues threonine 1358 to histidine 1382 form a disordered region. Phosphoserine; by CDK5 is present on serine 1367. Residue serine 1384 is modified to Phosphoserine. Positions leucine 1395–glutamate 1407 are enriched in basic and acidic residues. The segment at leucine 1395–proline 1493 is disordered. Residues serine 1408, serine 1409, serine 1430, serine 1449, and serine 1451 each carry the phosphoserine modification. Residues lysine 1417–aspartate 1436 show a composition bias toward polar residues. 2 stretches are compositionally biased toward low complexity: residues alanine 1437–serine 1451 and serine 1471–serine 1486. Phosphoserine is present on residues serine 1546 and serine 1567. Residues serine 1567 to arginine 1595 form a disordered region. Threonine 1569 bears the Phosphothreonine mark. Phosphoserine occurs at positions 1572, 1583, 1586, 1603, and 1606. Arginine 1619 bears the Asymmetric dimethylarginine mark. Phosphoserine is present on residues serine 1621, serine 1665, serine 1668, serine 1726, serine 1729, serine 1746, serine 1747, and serine 1752. The stretch at proline 1753–glutamate 1813 forms a coiled coil.

Interacts (via PDZ domain) with EPHA4 (via PDZ motif); controls neuronal morphology through regulation of the RAP1 (RAP1A or RAP1B) and RAP2 (RAP2A, RAP2B or RAP2C) GTPases. Interacts with DLG4, PDLIM5, PDLIM7 and LZTS3. Interacts with the actin cytoskeleton. Post-translationally, ubiquitinated and degraded by the SCF(BTRC) following phosphorylation by PLK2. In terms of processing, phosphorylated at Ser-1367 by CDK5, creating a docking site for the POLO box domains of PLK2. Subsequently, PLK2 binds and phosphorylates SIPA1L1, leading to ubiquitination and degradation by the proteasome. Detected in brain (at protein level).

It is found in the cytoplasm. The protein localises to the cytoskeleton. The protein resides in the postsynaptic density. Its subcellular location is the synapse. It localises to the synaptosome. Functionally, stimulates the GTPase activity of RAP2A. Promotes reorganization of the actin cytoskeleton and recruits DLG4 to F-actin. Contributes to the regulation of dendritic spine morphogenesis. The sequence is that of Signal-induced proliferation-associated 1-like protein 1 (Sipa1l1) from Rattus norvegicus (Rat).